A 1004-amino-acid chain; its full sequence is Kinesin-like protein KIN-7I (1004 aa).

In terms of domain architecture, Kinesin motor spans 6–326; the sequence is KILVSVRVRP…LLFATCAKEV (321 aa). 89–96 contacts ATP; that stretch reads GQTSSGKT. Coiled coils occupy residues 335-402, 517-576, and 634-661; these read VVSE…AQSR, KKEY…QKQS, and SVEK…DQSE. 3 disordered regions span residues 567–599, 628–671, and 802–830; these read EQSV…KSLP, SQQT…PEDE, and TMQH…GEKT. 2 stretches are compositionally biased toward basic and acidic residues: residues 569 to 582 and 634 to 652; these read SVEK…KEEM and SVEK…EDLK. Over residues 653–663 the composition is skewed to polar residues; sequence QNLSMDQSEQL. K881 is covalently cross-linked (Glycyl lysine isopeptide (Lys-Gly) (interchain with G-Cter in ubiquitin)).

The protein belongs to the TRAFAC class myosin-kinesin ATPase superfamily. Kinesin family. KIN-7 subfamily.

The protein is Kinesin-like protein KIN-7I of Arabidopsis thaliana (Mouse-ear cress).